A 443-amino-acid polypeptide reads, in one-letter code: Carbohydrate sulfotransferase 9 (443 aa).

The Cytoplasmic segment spans residues 1–12 (MQPSEMVMNPKQ). A helical; Signal-anchor for type II membrane protein transmembrane segment spans residues 13–33 (VFLSVLIFGVAGLLLFMYLQV). Topologically, residues 34 to 443 (WIEEQHTGRV…LMFNYTTPFL (410 aa)) are lumenal. A compositionally biased stretch (polar residues) spans 108 to 128 (LTKTSHSQGGDQALSKSTGSP). Positions 108 to 132 (LTKTSHSQGGDQALSKSTGSPTEKL) are disordered. An N-linked (GlcNAc...) asparagine glycan is attached at asparagine 159. 220–226 (PKAGCSN) serves as a coordination point for 3'-phosphoadenylyl sulfate. A glycan (N-linked (GlcNAc...) asparagine) is linked at asparagine 243. 280–288 (RDPMERLVS) serves as a coordination point for 3'-phosphoadenylyl sulfate. 2 N-linked (GlcNAc...) asparagine glycosylation sites follow: asparagine 324 and asparagine 437.

It belongs to the sulfotransferase 2 family. Highly expressed in trachea. Also expressed in fetal lung, adult pancreas, testis and salivary gland. Expressed at low level in pituitary gland, apex of the heart, adult lung, prostate and mammary gland. Weakly or not expressed in heart, liver and spinal cord.

It localises to the golgi apparatus membrane. The protein localises to the secreted. In terms of biological role, catalyzes the transfer of sulfate to position 4 of non-reducing N-acetylgalactosamine (GalNAc) residues in both N-glycans and O-glycans. Participates in biosynthesis of glycoprotein hormones lutropin and thyrotropin, by mediating sulfation of their carbohydrate structures. Has a higher activity toward carbonic anhydrase VI than toward lutropin. Only active against terminal GalNAcbeta1,GalNAcbeta. Isoform 2, but not isoform 1, is active toward chondroitin. This Homo sapiens (Human) protein is Carbohydrate sulfotransferase 9 (CHST9).